Reading from the N-terminus, the 112-residue chain is Small ribosomal subunit protein bS6 (112 aa).

It belongs to the bacterial ribosomal protein bS6 family.

Binds together with bS18 to 16S ribosomal RNA. The chain is Small ribosomal subunit protein bS6 (rpsF) from Chlamydia pneumoniae (Chlamydophila pneumoniae).